The sequence spans 435 residues: GTPase Der (435 aa).

EngA-type G domains lie at 4-167 and 175-350; these read PIVA…SPDA and ISFS…ENKN. Residues 10–17, 57–61, 119–122, 181–188, 228–232, and 293–296 each bind GTP; these read GQPNVGKS, DTGGI, NKAD, GRPNVGKS, DTAGI, and NKWD. The region spanning 351-435 is the KH-like domain; it reads QRIQSSVLND…PIKILPRKRK (85 aa).

The protein belongs to the TRAFAC class TrmE-Era-EngA-EngB-Septin-like GTPase superfamily. EngA (Der) GTPase family. As to quaternary structure, associates with the 50S ribosomal subunit.

Functionally, GTPase that plays an essential role in the late steps of ribosome biogenesis. This is GTPase Der from Lactobacillus delbrueckii subsp. bulgaricus (strain ATCC 11842 / DSM 20081 / BCRC 10696 / JCM 1002 / NBRC 13953 / NCIMB 11778 / NCTC 12712 / WDCM 00102 / Lb 14).